Consider the following 85-residue polypeptide: Antitoxin VapB4 (85 aa).

Belongs to the phD/YefM antitoxin family. In terms of assembly, interacts with cognate toxin VapC4.

Antitoxin component of a type II toxin-antitoxin (TA) system. Antitoxin that counteracts the effect of the VapC4 toxin. This Mycobacterium tuberculosis (strain CDC 1551 / Oshkosh) protein is Antitoxin VapB4 (vapB4).